We begin with the raw amino-acid sequence, 82 residues long: Sec-independent protein translocase protein TatA (82 aa).

A helical transmembrane segment spans residues 1 to 21 (MGGISVWQLLIIAVIVVLLFG). The interval 41-82 (KAMSEDEPAKKDDKDADFEPKSLEEQQKKEAAPESKKDKEQA) is disordered. Residues 42–82 (AMSEDEPAKKDDKDADFEPKSLEEQQKKEAAPESKKDKEQA) show a composition bias toward basic and acidic residues.

This sequence belongs to the TatA/E family. In terms of assembly, the Tat system comprises two distinct complexes: a TatABC complex, containing multiple copies of TatA, TatB and TatC subunits, and a separate TatA complex, containing only TatA subunits. Substrates initially bind to the TatABC complex, which probably triggers association of the separate TatA complex to form the active translocon.

The protein resides in the cell inner membrane. Part of the twin-arginine translocation (Tat) system that transports large folded proteins containing a characteristic twin-arginine motif in their signal peptide across membranes. TatA could form the protein-conducting channel of the Tat system. This is Sec-independent protein translocase protein TatA from Vibrio campbellii (strain ATCC BAA-1116).